The primary structure comprises 453 residues: Ribulose bisphosphate carboxylase large chain (453 aa).

The propeptide occupies 1 to 2 (MS). Position 3 is an N-acetylproline (proline 3). Lysine 14 is modified (N6,N6,N6-trimethyllysine). Residues asparagine 123 and threonine 173 each coordinate substrate. The active-site Proton acceptor is the lysine 175. Residue lysine 177 coordinates substrate. 3 residues coordinate Mg(2+): lysine 201, aspartate 203, and glutamate 204. An N6-carboxylysine modification is found at lysine 201. Catalysis depends on histidine 294, which acts as the Proton acceptor. The substrate site is built by arginine 295, histidine 327, and serine 379.

The protein belongs to the RuBisCO large chain family. Type I subfamily. As to quaternary structure, heterohexadecamer of 8 large chains and 8 small chains; disulfide-linked. The disulfide link is formed within the large subunit homodimers. The cofactor is Mg(2+). Post-translationally, the disulfide bond which can form in the large chain dimeric partners within the hexadecamer appears to be associated with oxidative stress and protein turnover.

It is found in the plastid. The protein resides in the chloroplast. It carries out the reaction 2 (2R)-3-phosphoglycerate + 2 H(+) = D-ribulose 1,5-bisphosphate + CO2 + H2O. The catalysed reaction is D-ribulose 1,5-bisphosphate + O2 = 2-phosphoglycolate + (2R)-3-phosphoglycerate + 2 H(+). Functionally, ruBisCO catalyzes two reactions: the carboxylation of D-ribulose 1,5-bisphosphate, the primary event in carbon dioxide fixation, as well as the oxidative fragmentation of the pentose substrate in the photorespiration process. Both reactions occur simultaneously and in competition at the same active site. The polypeptide is Ribulose bisphosphate carboxylase large chain (Galium elongatum (Great marsh bedstraw)).